We begin with the raw amino-acid sequence, 375 residues long: cAMP-dependent protein kinase regulatory subunit (375 aa).

Residues 28–142 are dimerization and phosphorylation; it reads RFCADYFNER…SLYKSVSHNF (115 aa). A compositionally biased stretch (basic and acidic residues) spans 41 to 50; it reads REEADDDGPR. Positions 41 to 102 are disordered; the sequence is REEADDDGPR…EPAAPFTRRT (62 aa). A compositionally biased stretch (polar residues) spans 64 to 82; that stretch reads GSSSRSTDGSLFRSSFADT. Residues 83–97 show a composition bias toward low complexity; it reads SSEGPGSASSEPAAP. Phosphoserine is present on Ser-103. Residues 143-258, Glu-208, Arg-217, 261-375, Glu-328, and Arg-337 each bind 3',5'-cyclic AMP; these read LFGN…FLKE and ILSD…DPTK.

It belongs to the cAMP-dependent kinase regulatory chain family. Tetramer, composed of 2 regulatory (R) and 2 catalytic (C) subunits. In the presence of cAMP it dissociates into 2 active monomeric C subunits and an R dimer.

This is cAMP-dependent protein kinase regulatory subunit (PKAR) from Yarrowia lipolytica (strain CLIB 122 / E 150) (Yeast).